The following is a 1477-amino-acid chain: Ring canal kelch protein (1477 aa).

Disordered stretches follow at residues leucine 19–glycine 62, leucine 76–glycine 96, and serine 108–glutamate 137. The span at serine 20 to asparagine 46 shows a compositional bias: low complexity. Phosphoserine occurs at positions 108 and 111. The BTB domain occupies cysteine 157–glutamate 223. Kelch repeat units follow at residues isoleucine 404–aspartate 449, lysine 450–glycine 496, isoleucine 498–glycine 543, leucine 545–asparagine 592, leucine 594–glycine 639, and leucine 641–lysine 687. Selenocysteine 690 is a non-standard amino acid (selenocysteine). 5 disordered regions span residues proline 744–isoleucine 841, histidine 1119–threonine 1200, arginine 1291–aspartate 1326, proline 1359–lysine 1416, and proline 1446–aspartate 1477. Low complexity-rich tracts occupy residues alanine 763 to asparagine 813 and alanine 820 to glutamine 839. The span at isoleucine 1125–threonine 1137 shows a compositional bias: polar residues. Residues lysine 1166 to serine 1192 are compositionally biased toward low complexity. Low complexity-rich tracts occupy residues glutamine 1374–glutamine 1391 and threonine 1456–aspartate 1477.

Both proteins are expressed in ovaries, male testis, ovariectomized females, cuticle, salivary gland and imaginal disks. Kelch short protein is the predominant form and is also expressed in fat bodies. On entry into metamorphosis levels of full-length protein increase in testis and imaginal disks.

It localises to the cytoplasm. It is found in the cytoskeleton. Functionally, component of ring canals that regulates the flow of cytoplasm between cells. May be involved in the regulation of cytoplasm flow from nurse cells to the oocyte during oogenesis. Binds actin. The polypeptide is Ring canal kelch protein (kel) (Drosophila melanogaster (Fruit fly)).